A 192-amino-acid chain; its full sequence is Probable protein adenylyltransferase y4lH (192 aa).

The region spanning 52–190 is the Fido domain; the sequence is LDFAHYRALH…LAPLAAEIRR (139 aa). ATP contacts are provided by residues 82–83 and 139–141; these read KG and GNG.

It belongs to the fic family.

The enzyme catalyses L-tyrosyl-[protein] + ATP = O-(5'-adenylyl)-L-tyrosyl-[protein] + diphosphate. It catalyses the reaction L-threonyl-[protein] + ATP = 3-O-(5'-adenylyl)-L-threonyl-[protein] + diphosphate. In terms of biological role, probable adenylyltransferase that mediates the addition of adenosine 5'-monophosphate (AMP) to specific residues of target proteins. This chain is Probable protein adenylyltransferase y4lH, found in Sinorhizobium fredii (strain NBRC 101917 / NGR234).